Consider the following 324-residue polypeptide: uncharacterized protein (324 aa).

The segment covering 1-11 (MNTNINVNGSN) has biased composition (polar residues). Disordered regions lie at residues 1 to 77 (MNTN…YSYS), 132 to 194 (NNHY…NNNN), and 272 to 324 (DENI…DNDS). Residues 21 to 64 (NENNNNNNGRNNNTNNNNNGRYNNNNNNNNNNNNNNYNLNMNST) are compositionally biased toward low complexity. Low complexity predominate over residues 279–324 (SNNNNNNNNNNNNSYNVNICRNNSNFNVNENNGGDNNNDNNNDNDS).

This is an uncharacterized protein from Dictyostelium discoideum (Social amoeba).